The chain runs to 235 residues: Elongation factor Tu, chloroplastic (235 aa).

In terms of domain architecture, tr-type G spans 1–125; it reads KNMITGAAQM…SVDSYIPTPI (125 aa). 47–50 is a binding site for GTP; sequence NKED.

This sequence belongs to the TRAFAC class translation factor GTPase superfamily. Classic translation factor GTPase family. EF-Tu/EF-1A subfamily.

The protein localises to the plastid. It is found in the chloroplast. The catalysed reaction is GTP + H2O = GDP + phosphate + H(+). In terms of biological role, GTP hydrolase that promotes the GTP-dependent binding of aminoacyl-tRNA to the A-site of ribosomes during protein biosynthesis. The sequence is that of Elongation factor Tu, chloroplastic (tufA) from Costaria costata (Five-ribbed kelp).